Here is a 175-residue protein sequence, read N- to C-terminus: Threonylcarbamoyl-AMP synthase (175 aa).

Residues 1-175 (MLHNDDVIAY…IINGKLIRYV (175 aa)) form the YrdC-like domain.

It belongs to the SUA5 family. TsaC subfamily.

It localises to the cytoplasm. The catalysed reaction is L-threonine + hydrogencarbonate + ATP = L-threonylcarbamoyladenylate + diphosphate + H2O. Functionally, required for the formation of a threonylcarbamoyl group on adenosine at position 37 (t(6)A37) in tRNAs that read codons beginning with adenine. Catalyzes the conversion of L-threonine, HCO(3)(-)/CO(2) and ATP to give threonylcarbamoyl-AMP (TC-AMP) as the acyladenylate intermediate, with the release of diphosphate. The polypeptide is Threonylcarbamoyl-AMP synthase (Buchnera aphidicola subsp. Acyrthosiphon pisum (strain APS) (Acyrthosiphon pisum symbiotic bacterium)).